Consider the following 532-residue polypeptide: Intercellular adhesion molecule 1 (532 aa).

Residues 1–27 form the signal peptide; the sequence is MAPSSPRPALPALLVLLGALFPGPGNA. Topologically, residues 28–480 are extracellular; it reads QTSVSPPKVI…TVNVLSPRYE (453 aa). Ig-like C2-type domains are found at residues 41 to 103 and 128 to 193; these read GGSV…QSTA and GKDL…LDLR. 3 disulfide bridges follow: cysteine 48–cysteine 92, cysteine 52–cysteine 96, and cysteine 135–cysteine 186. Positions 152–154 match the Cell attachment site; atypical motif; the sequence is RGE. N-linked (GlcNAc...) asparagine glycans are attached at residues asparagine 202 and asparagine 267. Ig-like C2-type domains follow at residues 230 to 297 and 325 to 378; these read DTQG…LGTQ and GTEV…LEVA. Intrachain disulfides connect cysteine 237–cysteine 290 and cysteine 332–cysteine 371. Asparagine 385 and asparagine 406 each carry an N-linked (GlcNAc...) asparagine glycan. Disulfide bonds link cysteine 403–cysteine 419, cysteine 419–cysteine 457, and cysteine 431–cysteine 457. One can recognise an Ig-like C2-type 5 domain in the interval 412–464; sequence NSQQTPMCQAWGNPLPELKCLKDGTFPLPVGESVTVTRDLEGTYLCRARSTQG. A helical transmembrane segment spans residues 481–503; the sequence is FVIIAVVAAAVIMGTAGLSTYLY. Residues 504–532 are Cytoplasmic-facing; sequence NRQRKIRKYRLQQAQKGTPMKPNTQATPP. Threonine 521 and threonine 530 each carry phosphothreonine.

Belongs to the immunoglobulin superfamily. ICAM family. As to quaternary structure, homodimer. Interacts with MUC1 and promotes cell aggregation in epithelial cells. Interacts with ARHGEF26/SGEF. Interacts (on T cell side) with CD81, CD247 and CD9 at immunological synapses between antigen-presenting cells and T cells. Post-translationally, monoubiquitinated, which is promoted by MARCH9 and leads to endocytosis.

The protein localises to the membrane. In terms of biological role, ICAM proteins are ligands for the leukocyte adhesion protein LFA-1 (integrin alpha-L/beta-2). During leukocyte trans-endothelial migration, ICAM1 engagement promotes the assembly of endothelial apical cups through ARHGEF26/SGEF and RHOG activation. The chain is Intercellular adhesion molecule 1 (ICAM1) from Gorilla gorilla gorilla (Western lowland gorilla).